We begin with the raw amino-acid sequence, 224 residues long: Putative O-methyltransferase MUL_4520 (224 aa).

The span at 1–11 shows a compositional bias: polar residues; that stretch reads MHGTDSSSDTP. The interval 1–20 is disordered; sequence MHGTDSSSDTPGQPAPSRAE. Residues Val51, Glu73, 75–76, Ser81, Asp99, and Ile100 each bind S-adenosyl-L-methionine; that span reads GT. Asp147 is a substrate binding site. Residue Asp149 participates in S-adenosyl-L-methionine binding.

Belongs to the class I-like SAM-binding methyltransferase superfamily. Cation-dependent O-methyltransferase family.

This chain is Putative O-methyltransferase MUL_4520, found in Mycobacterium ulcerans (strain Agy99).